A 161-amino-acid polypeptide reads, in one-letter code: Phosphohistidine phosphatase SixA (161 aa).

This sequence belongs to the SixA phosphatase family.

Its function is as follows. Exhibits phosphohistidine phosphatase activity towards the HPt domain of the ArcB sensor involved in the multistep His-Asp phosphorelay. The sequence is that of Phosphohistidine phosphatase SixA (sixA) from Escherichia coli (strain K12).